A 332-amino-acid chain; its full sequence is Geranylgeranyl diphosphate synthase (332 aa).

Isopentenyl diphosphate contacts are provided by K45, R48, and H77. Positions 84 and 88 each coordinate Mg(2+). R93 is an an all-trans-polyprenyl diphosphate binding site. Residue R94 participates in isopentenyl diphosphate binding. Residues K177, T178, Q215, K232, and K242 each coordinate an all-trans-polyprenyl diphosphate.

It belongs to the FPP/GGPP synthase family. Requires Mg(2+) as cofactor.

It catalyses the reaction isopentenyl diphosphate + (2E,6E)-farnesyl diphosphate = (2E,6E,10E)-geranylgeranyl diphosphate + diphosphate. It participates in isoprenoid biosynthesis; geranylgeranyl diphosphate biosynthesis; geranylgeranyl diphosphate from farnesyl diphosphate and isopentenyl diphosphate: step 1/1. Functionally, catalyzes the condensation of isopentenyl pyrophosphate with the allylic pyrophosphates to yield geranylgeranyl diphosphate (GGPP) which is a precursor of the ether-linked lipids. The polypeptide is Geranylgeranyl diphosphate synthase (gds) (Saccharolobus solfataricus (strain ATCC 35092 / DSM 1617 / JCM 11322 / P2) (Sulfolobus solfataricus)).